The chain runs to 369 residues: 4-hydroxy-3-methylbut-2-en-1-yl diphosphate synthase (flavodoxin) (369 aa).

The [4Fe-4S] cluster site is built by cysteine 270, cysteine 273, cysteine 305, and glutamate 312.

Belongs to the IspG family. Requires [4Fe-4S] cluster as cofactor.

It carries out the reaction (2E)-4-hydroxy-3-methylbut-2-enyl diphosphate + oxidized [flavodoxin] + H2O + 2 H(+) = 2-C-methyl-D-erythritol 2,4-cyclic diphosphate + reduced [flavodoxin]. It functions in the pathway isoprenoid biosynthesis; isopentenyl diphosphate biosynthesis via DXP pathway; isopentenyl diphosphate from 1-deoxy-D-xylulose 5-phosphate: step 5/6. In terms of biological role, converts 2C-methyl-D-erythritol 2,4-cyclodiphosphate (ME-2,4cPP) into 1-hydroxy-2-methyl-2-(E)-butenyl 4-diphosphate. This is 4-hydroxy-3-methylbut-2-en-1-yl diphosphate synthase (flavodoxin) from Pseudomonas syringae pv. syringae (strain B728a).